Consider the following 156-residue polypeptide: Small ribosomal subunit protein uS7 (156 aa).

Belongs to the universal ribosomal protein uS7 family. As to quaternary structure, part of the 30S ribosomal subunit. Contacts proteins S9 and S11.

Functionally, one of the primary rRNA binding proteins, it binds directly to 16S rRNA where it nucleates assembly of the head domain of the 30S subunit. Is located at the subunit interface close to the decoding center, probably blocks exit of the E-site tRNA. The chain is Small ribosomal subunit protein uS7 from Aeromonas hydrophila subsp. hydrophila (strain ATCC 7966 / DSM 30187 / BCRC 13018 / CCUG 14551 / JCM 1027 / KCTC 2358 / NCIMB 9240 / NCTC 8049).